We begin with the raw amino-acid sequence, 518 residues long: GMP synthase [glutamine-hydrolyzing] (518 aa).

The Glutamine amidotransferase type-1 domain occupies 13–203; it reads KIIVLDFGSQ…ALNICGCKGD (191 aa). Cys90 serves as the catalytic Nucleophile. Residues His177 and Glu179 contribute to the active site. The GMPS ATP-PPase domain occupies 204–393; sequence WTMENFSEVE…LGMPDAIVWR (190 aa). 231–237 is a binding site for ATP; sequence SGGVDSS.

In terms of assembly, homodimer.

It carries out the reaction XMP + L-glutamine + ATP + H2O = GMP + L-glutamate + AMP + diphosphate + 2 H(+). Its pathway is purine metabolism; GMP biosynthesis; GMP from XMP (L-Gln route): step 1/1. In terms of biological role, catalyzes the synthesis of GMP from XMP. This Listeria innocua serovar 6a (strain ATCC BAA-680 / CLIP 11262) protein is GMP synthase [glutamine-hydrolyzing].